The chain runs to 163 residues: Superoxide dismutase [Mn] (163 aa).

Mn(2+) is bound by residues H2, H50, D134, and H138.

It belongs to the iron/manganese superoxide dismutase family. The cofactor is Mn(2+).

It carries out the reaction 2 superoxide + 2 H(+) = H2O2 + O2. In terms of biological role, destroys superoxide anion radicals which are normally produced within the cells and which are toxic to biological systems. This is Superoxide dismutase [Mn] (sodA) from Mycobacterium kansasii.